Reading from the N-terminus, the 21-residue chain is GLLGSIGNAIGAFIANKLKPK.

Expressed by the skin dorsal glands.

It is found in the secreted. In terms of biological role, has no antimicrobial activity. Strongly inhibits the formation of NO by neuronal nitric oxide synthase at micromolar concentrations. This is Dahlein-5.2 from Ranoidea dahlii (Dahl's aquatic frog).